We begin with the raw amino-acid sequence, 86 residues long: Large ribosomal subunit protein uL23 (86 aa).

The protein belongs to the universal ribosomal protein uL23 family. In terms of assembly, part of the 50S ribosomal subunit. Contacts protein L29.

Its function is as follows. Binds to 23S rRNA. One of the proteins that surrounds the polypeptide exit tunnel on the outside of the ribosome. The sequence is that of Large ribosomal subunit protein uL23 from Methanococcus aeolicus (strain ATCC BAA-1280 / DSM 17508 / OCM 812 / Nankai-3).